The primary structure comprises 726 residues: Probable dipeptidyl-peptidase 5 (726 aa).

A signal peptide spans 1-19 (MAAAKWLIASLAFASSGLA). Asparagine 96 and asparagine 252 each carry an N-linked (GlcNAc...) asparagine glycan. Residues 269–291 (AEPINKRNGPRTPQGIEGASSSP) form a disordered region. Serine 558 acts as the Charge relay system in catalysis. Asparagine 605 is a glycosylation site (N-linked (GlcNAc...) asparagine). Catalysis depends on charge relay system residues aspartate 641 and histidine 673. A glycan (N-linked (GlcNAc...) asparagine) is linked at asparagine 699.

The protein belongs to the peptidase S9C family.

The protein localises to the secreted. Extracellular dipeptidyl-peptidase which removes N-terminal dipeptides sequentially from polypeptides having unsubstituted N-termini. Contributes to pathogenicity. The protein is Probable dipeptidyl-peptidase 5 (DPP5) of Trichophyton verrucosum (strain HKI 0517).